A 342-amino-acid polypeptide reads, in one-letter code: Phosphoribosylformylglycinamidine cyclo-ligase (342 aa).

Belongs to the AIR synthase family.

Its subcellular location is the cytoplasm. It carries out the reaction 2-formamido-N(1)-(5-O-phospho-beta-D-ribosyl)acetamidine + ATP = 5-amino-1-(5-phospho-beta-D-ribosyl)imidazole + ADP + phosphate + H(+). It participates in purine metabolism; IMP biosynthesis via de novo pathway; 5-amino-1-(5-phospho-D-ribosyl)imidazole from N(2)-formyl-N(1)-(5-phospho-D-ribosyl)glycinamide: step 2/2. The chain is Phosphoribosylformylglycinamidine cyclo-ligase from Staphylococcus saprophyticus subsp. saprophyticus (strain ATCC 15305 / DSM 20229 / NCIMB 8711 / NCTC 7292 / S-41).